We begin with the raw amino-acid sequence, 166 residues long: Lipoprotein signal peptidase (166 aa).

The next 3 helical transmembrane spans lie at 12–32, 70–90, and 102–122; these read WLWV…LILQ, WFFS…MYRS, and ALII…GFVV. Catalysis depends on residues D123 and D141. Residues 137–157 traverse the membrane as a helical segment; it reads FNLADSAICIGAALIVLEGFL.

This sequence belongs to the peptidase A8 family.

It localises to the cell inner membrane. The catalysed reaction is Release of signal peptides from bacterial membrane prolipoproteins. Hydrolyzes -Xaa-Yaa-Zaa-|-(S,diacylglyceryl)Cys-, in which Xaa is hydrophobic (preferably Leu), and Yaa (Ala or Ser) and Zaa (Gly or Ala) have small, neutral side chains.. It functions in the pathway protein modification; lipoprotein biosynthesis (signal peptide cleavage). Its function is as follows. This protein specifically catalyzes the removal of signal peptides from prolipoproteins. This chain is Lipoprotein signal peptidase, found in Klebsiella pneumoniae subsp. pneumoniae (strain ATCC 700721 / MGH 78578).